Reading from the N-terminus, the 281-residue chain is Pantothenate synthetase (281 aa).

Methionine 30–histidine 37 provides a ligand contact to ATP. The active-site Proton donor is the histidine 37. Glutamine 60 contributes to the (R)-pantoate binding site. Glutamine 60 lines the beta-alanine pocket. Glycine 146–aspartate 149 is a binding site for ATP. Residue glutamine 152 coordinates (R)-pantoate. ATP is bound by residues isoleucine 175 and lysine 183–arginine 186.

The protein belongs to the pantothenate synthetase family. Homodimer.

It is found in the cytoplasm. It carries out the reaction (R)-pantoate + beta-alanine + ATP = (R)-pantothenate + AMP + diphosphate + H(+). It participates in cofactor biosynthesis; (R)-pantothenate biosynthesis; (R)-pantothenate from (R)-pantoate and beta-alanine: step 1/1. Its function is as follows. Catalyzes the condensation of pantoate with beta-alanine in an ATP-dependent reaction via a pantoyl-adenylate intermediate. The polypeptide is Pantothenate synthetase (Ruminiclostridium cellulolyticum (strain ATCC 35319 / DSM 5812 / JCM 6584 / H10) (Clostridium cellulolyticum)).